The following is a 194-amino-acid chain: Histone H1.0 (194 aa).

Position 1 is an N-acetylmethionine (Met1). The interval 1–26 is disordered; sequence MTENSTSTPAAKPKRAKAAKKSTDHP. Thr2 carries the post-translational modification N-acetylthreonine; in Histone H1.0, N-terminally processed. One can recognise an H15 domain in the interval 24–97; sequence DHPKYSDMIV…GASGSFRLAK (74 aa). Citrulline is present on Arg42. Residues 86-194 are disordered; it reads GVGASGSFRL…SSAKRASKKK (109 aa). Ser104 is modified (ADP-ribosylserine). The span at 105 to 194 shows a compositional bias: basic residues; that stretch reads VAFKKTKKEV…SSAKRASKKK (90 aa).

The protein belongs to the histone H1/H5 family. Post-translationally, ADP-ribosylated on Ser-104 in response to DNA damage.

The protein localises to the nucleus. It is found in the chromosome. Functionally, histones H1 are necessary for the condensation of nucleosome chains into higher-order structures. The histones H1.0 are found in cells that are in terminal stages of differentiation or that have low rates of cell division. This Rattus norvegicus (Rat) protein is Histone H1.0 (H1-0).